A 346-amino-acid chain; its full sequence is D-alanine--D-alanine ligase (346 aa).

Residues 133-324 (KLYAQSVGVK…IVDNLAKNIE (192 aa)) enclose the ATP-grasp domain. Residue 159 to 211 (LSFPCILKPARLGSSIGISIVKDESELKYAKDVAFEFDEDVVVEQFVSNIKEY) coordinates ATP. Mg(2+) is bound by residues aspartate 284, glutamate 296, and asparagine 298.

It belongs to the D-alanine--D-alanine ligase family. Mg(2+) serves as cofactor. The cofactor is Mn(2+).

Its subcellular location is the cytoplasm. The enzyme catalyses 2 D-alanine + ATP = D-alanyl-D-alanine + ADP + phosphate + H(+). The protein operates within cell wall biogenesis; peptidoglycan biosynthesis. Cell wall formation. The chain is D-alanine--D-alanine ligase from Campylobacter lari (strain RM2100 / D67 / ATCC BAA-1060).